Consider the following 679-residue polypeptide: Protein hook (679 aa).

The Calponin-homology (CH) domain maps to 6-123 (NEMYYSLLEW…RLLQLVLGCA (118 aa)). Coiled-coil stretches lie at residues 135–437 (EIMC…LKCG) and 480–574 (QTAL…QEIL).

The protein belongs to the hook family. Homodimer. Interacts with microtubules via its N-terminus.

It is found in the cytoplasm. The protein resides in the cytoskeleton. It localises to the endosome. The protein localises to the synapse. Involved in endocytic trafficking by stabilizing organelles of the endocytic pathway. Probably acts as a cytoskeletal linker protein required to tether endosome vesicles to the cytoskeleton. Involved in modulation of endocytosis at stages required for down-regulation of membrane proteins that control synapse size. Not involved in synaptic vesicle recycling. Required in R7 cells for boss endocytosis into multivesicular bodies (MVBs). Has a role in regulating adult longevity. The chain is Protein hook from Drosophila yakuba (Fruit fly).